We begin with the raw amino-acid sequence, 480 residues long: Adenylosuccinate lyase (480 aa).

Residues R14, Y15, R79, H80, and D81 each coordinate AMP. H80 is a fumarate binding site. The active-site Proton donor/acceptor is H153. Q236 is an AMP binding site. Q236 provides a ligand contact to fumarate. Q236 contributes to the N(6)-(1,2-dicarboxyethyl)-AMP binding site. Catalysis depends on S284, which acts as the Proton donor/acceptor. Residues S285, K290, and N292 each contribute to the fumarate site. S285, K290, and N292 together coordinate N(6)-(1,2-dicarboxyethyl)-AMP. Residue R298 participates in AMP binding. Residues R324, S329, and R333 each coordinate N(6)-(1,2-dicarboxyethyl)-AMP. 2 residues coordinate AMP: S329 and R333.

This sequence belongs to the lyase 1 family. Adenylosuccinate lyase subfamily. Homotetramer.

The catalysed reaction is N(6)-(1,2-dicarboxyethyl)-AMP = fumarate + AMP. It participates in purine metabolism; AMP biosynthesis via salvage pathway. Catalyzes conversion of succinyladenosine monophosphate (SAMP) to AMP and fumarate on the purine salvage pathway. The polypeptide is Adenylosuccinate lyase (Schistosoma mansoni (Blood fluke)).